Reading from the N-terminus, the 663-residue chain is Methionine--tRNA ligase (663 aa).

Residues 10–20 (AYTNGPLHLGH) carry the 'HIGH' region motif. Residues Cys-142, Cys-145, Cys-154, and Cys-157 each contribute to the Zn(2+) site. A 'KMSKS' region motif is present at residues 323-327 (KMSTS). ATP is bound at residue Thr-326. The tRNA-binding domain maps to 563–663 (YFGNVDLRVG…RDLPVGSKIH (101 aa)).

The protein belongs to the class-I aminoacyl-tRNA synthetase family. MetG type 1 subfamily. In terms of assembly, homodimer. Zn(2+) serves as cofactor.

Its subcellular location is the cytoplasm. It catalyses the reaction tRNA(Met) + L-methionine + ATP = L-methionyl-tRNA(Met) + AMP + diphosphate. In terms of biological role, is required not only for elongation of protein synthesis but also for the initiation of all mRNA translation through initiator tRNA(fMet) aminoacylation. The chain is Methionine--tRNA ligase from Methanococcus maripaludis (strain C7 / ATCC BAA-1331).